A 471-amino-acid chain; its full sequence is Probable ribonuclease FAU-1 (471 aa).

Residues 93 to 139 (GAVFDAAVDHTVGGGAILDLGDDREAYLPFGAVDDHVTDGDTLRVAI) enclose the S1 motif domain.

It belongs to the FAU-1 family.

Functionally, probable RNase involved in rRNA stability through maturation and/or degradation of precursor rRNAs. Binds to RNA in loop regions with AU-rich sequences. In Halobacterium salinarum (strain ATCC 29341 / DSM 671 / R1), this protein is Probable ribonuclease FAU-1.